Here is a 547-residue protein sequence, read N- to C-terminus: Chaperonin GroEL (547 aa).

ATP contacts are provided by residues 29–32, Lys-50, 86–90, Gly-414, and Asp-495; these read TLGP and DGTTT. Residues 525-547 are disordered; that stretch reads PSDKEDSIPPMRGGMGGMGGMDF. Residues 537-547 show a composition bias toward gly residues; the sequence is GGMGGMGGMDF.

The protein belongs to the chaperonin (HSP60) family. Forms a cylinder of 14 subunits composed of two heptameric rings stacked back-to-back. Interacts with the co-chaperonin GroES.

Its subcellular location is the cytoplasm. The enzyme catalyses ATP + H2O + a folded polypeptide = ADP + phosphate + an unfolded polypeptide.. Together with its co-chaperonin GroES, plays an essential role in assisting protein folding. The GroEL-GroES system forms a nano-cage that allows encapsulation of the non-native substrate proteins and provides a physical environment optimized to promote and accelerate protein folding. The polypeptide is Chaperonin GroEL (Rickettsia felis (strain ATCC VR-1525 / URRWXCal2) (Rickettsia azadi)).